Reading from the N-terminus, the 324-residue chain is Acetyl-coenzyme A carboxylase carboxyl transferase subunit alpha (324 aa).

The CoA carboxyltransferase C-terminal domain maps to 44 to 298 (QLERRAEELR…KQTLIDTIDE (255 aa)).

It belongs to the AccA family. As to quaternary structure, acetyl-CoA carboxylase is a heterohexamer composed of biotin carboxyl carrier protein (AccB), biotin carboxylase (AccC) and two subunits each of ACCase subunit alpha (AccA) and ACCase subunit beta (AccD).

The protein localises to the cytoplasm. The enzyme catalyses N(6)-carboxybiotinyl-L-lysyl-[protein] + acetyl-CoA = N(6)-biotinyl-L-lysyl-[protein] + malonyl-CoA. The protein operates within lipid metabolism; malonyl-CoA biosynthesis; malonyl-CoA from acetyl-CoA: step 1/1. Component of the acetyl coenzyme A carboxylase (ACC) complex. First, biotin carboxylase catalyzes the carboxylation of biotin on its carrier protein (BCCP) and then the CO(2) group is transferred by the carboxyltransferase to acetyl-CoA to form malonyl-CoA. The polypeptide is Acetyl-coenzyme A carboxylase carboxyl transferase subunit alpha (Rippkaea orientalis (strain PCC 8801 / RF-1) (Cyanothece sp. (strain PCC 8801))).